Consider the following 386-residue polypeptide: Beta-citrylglutamate synthase B (386 aa).

The ATP-grasp domain occupies 119-304; sequence FQELAGHGVP…VAGIIADYAA (186 aa). Residues Lys158, 193 to 203, and Arg219 each bind ATP; that span reads QKYVKESHGRD. 3 residues coordinate Mg(2+): Asp264, Glu277, and Asn279. Residues Asp264, Glu277, and Asn279 each coordinate Mn(2+). The tract at residues 325–359 is disordered; it reads ASETSEPELGPPASTAVDNMSASSSSVDSDPESTE. The span at 338-352 shows a compositional bias: low complexity; the sequence is STAVDNMSASSSSVD.

Belongs to the RimK family. Mg(2+) is required as a cofactor. The cofactor is Mn(2+).

It localises to the cytoplasm. It catalyses the reaction citrate + L-glutamate + ATP = beta-citrylglutamate + ADP + phosphate + H(+). It carries out the reaction N-acetyl-L-aspartate + L-glutamate + ATP = N-acetyl-L-aspartyl-L-glutamate + ADP + phosphate + H(+). Its function is as follows. Catalyzes the synthesis of beta-citryl-L-glutamate and N-acetyl-L-aspartyl-L-glutamate. Beta-citryl-L-glutamate is synthesized more efficiently than N-acetyl-L-aspartyl-L-glutamate. The protein is Beta-citrylglutamate synthase B (RIMKLB) of Homo sapiens (Human).